Consider the following 612-residue polypeptide: MACPF domain-containing protein NSL1 (612 aa).

The 334-residue stretch at 5–338 folds into the MACPF domain; that stretch reads NFTRLDAHSA…PPIEELHQFL (334 aa).

This sequence belongs to the complement C6/C7/C8/C9 (TC 1.C.39) family.

In terms of biological role, negatively controls the salicylic acid (SA)-mediated pathway of programmed cell death in plant immunity. The protein is MACPF domain-containing protein NSL1 (NSL1) of Arabidopsis thaliana (Mouse-ear cress).